The primary structure comprises 276 residues: ATP synthase subunit a (276 aa).

7 consecutive transmembrane segments (helical) span residues 49–69, 109–129, 137–157, 173–193, 203–223, 232–252, and 253–273; these read KPMLQLVLAAIVLFVFFFAAA, YLFTLFFFILLNNAFGSIPFI, SGMVYGLAVLSWVIYNAAGIS, GIRGPILALLIPLEFMSNILV, FANMFAGHLLLILFALGGEYI, APVGILAWLMFVAVAFLEMLI, and QFLQAYVFVLLNAMYISGAVA.

This sequence belongs to the ATPase A chain family. In terms of assembly, F-type ATPases have 2 components, CF(1) - the catalytic core - and CF(0) - the membrane proton channel. CF(1) has five subunits: alpha(3), beta(3), gamma(1), delta(1), epsilon(1). CF(0) has three main subunits: a(1), b(2) and c(9-12). The alpha and beta chains form an alternating ring which encloses part of the gamma chain. CF(1) is attached to CF(0) by a central stalk formed by the gamma and epsilon chains, while a peripheral stalk is formed by the delta and b chains.

The protein resides in the cell membrane. Functionally, key component of the proton channel; it plays a direct role in the translocation of protons across the membrane. This Nocardioides sp. (strain ATCC BAA-499 / JS614) protein is ATP synthase subunit a.